The sequence spans 251 residues: 5-oxoprolinase subunit A (251 aa).

This sequence belongs to the LamB/PxpA family. Forms a complex composed of PxpA, PxpB and PxpC.

It carries out the reaction 5-oxo-L-proline + ATP + 2 H2O = L-glutamate + ADP + phosphate + H(+). In terms of biological role, catalyzes the cleavage of 5-oxoproline to form L-glutamate coupled to the hydrolysis of ATP to ADP and inorganic phosphate. The protein is 5-oxoprolinase subunit A of Paracidovorax citrulli (strain AAC00-1) (Acidovorax citrulli).